The sequence spans 296 residues: 4-hydroxybenzoate octaprenyltransferase (296 aa).

8 helical membrane-spanning segments follow: residues 28 to 48 (IGTL…SDGI), 51 to 71 (LAVL…GCVI), 102 to 122 (LLLT…LNHL), 143 to 163 (FFPI…PMAF), 174 to 194 (AWIL…VYAM), 212 to 232 (FGRY…LLMA), 233 to 253 (VLGA…IVLL), and 274 to 294 (FLAN…HTFF).

Belongs to the UbiA prenyltransferase family. Requires Mg(2+) as cofactor.

It is found in the cell inner membrane. It carries out the reaction all-trans-octaprenyl diphosphate + 4-hydroxybenzoate = 4-hydroxy-3-(all-trans-octaprenyl)benzoate + diphosphate. Its pathway is cofactor biosynthesis; ubiquinone biosynthesis. In terms of biological role, catalyzes the prenylation of para-hydroxybenzoate (PHB) with an all-trans polyprenyl group. Mediates the second step in the final reaction sequence of ubiquinone-8 (UQ-8) biosynthesis, which is the condensation of the polyisoprenoid side chain with PHB, generating the first membrane-bound Q intermediate 3-octaprenyl-4-hydroxybenzoate. This is 4-hydroxybenzoate octaprenyltransferase from Neisseria meningitidis serogroup C (strain 053442).